The sequence spans 190 residues: MFGVAKPPPSPIPKPPRGRHFGEKYPESVNFPSRGARQRASTRHRPSIKEVWEPPAPPGAGMIFWGENGENGDFGQSAPSCYERRRARSQGGQGAENAAPVLRPGPEGRRRRESLIFLEGDMVRETATVAPWTVSPLRPERPKSLLGRFRSRLTVWREVPRTPGPVAPIPELPGEADDPPTRTPPPPPDD.

Over residues 1–15 (MFGVAKPPPSPIPKP) the composition is skewed to pro residues. 2 disordered regions span residues 1 to 110 (MFGV…EGRR) and 160 to 190 (PRTP…PPDD). Residues 36–46 (ARQRASTRHRP) are compositionally biased toward basic residues. Pro residues-rich tracts occupy residues 162–171 (TPGPVAPIPE) and 181–190 (TRTPPPPPDD).

The polypeptide is Protein E6C (13) (Equus caballus (Horse)).